Consider the following 431-residue polypeptide: Glutamyl-tRNA(Gln) amidotransferase subunit A (431 aa).

Residues lysine 55 and serine 130 each act as charge relay system in the active site. Residue serine 154 is the Acyl-ester intermediate of the active site.

It belongs to the amidase family. GatA subfamily. Heterotrimer of A, B and C subunits.

It carries out the reaction L-glutamyl-tRNA(Gln) + L-glutamine + ATP + H2O = L-glutaminyl-tRNA(Gln) + L-glutamate + ADP + phosphate + H(+). In terms of biological role, allows the formation of correctly charged Gln-tRNA(Gln) through the transamidation of misacylated Glu-tRNA(Gln) in organisms which lack glutaminyl-tRNA synthetase. The reaction takes place in the presence of glutamine and ATP through an activated gamma-phospho-Glu-tRNA(Gln). This is Glutamyl-tRNA(Gln) amidotransferase subunit A from Methanococcus maripaludis (strain C7 / ATCC BAA-1331).